A 206-amino-acid chain; its full sequence is RNA-free ribonuclease P (206 aa).

The disordered stretch occupies residues 187–206 (NLAGDDPGHAPPCGPDQPAG). Positions 195–206 (HAPPCGPDQPAG) are enriched in pro residues.

The protein belongs to the HARP family.

It catalyses the reaction Endonucleolytic cleavage of RNA, removing 5'-extranucleotides from tRNA precursor.. Its function is as follows. RNA-free RNase P that catalyzes the removal of the 5'-leader sequence from pre-tRNA to produce the mature 5'-terminus. This chain is RNA-free ribonuclease P, found in Halorhodospira halophila (strain DSM 244 / SL1) (Ectothiorhodospira halophila (strain DSM 244 / SL1)).